The primary structure comprises 82 residues: Small ribosomal subunit protein uS17c (82 aa).

Belongs to the universal ribosomal protein uS17 family. In terms of assembly, part of the 30S ribosomal subunit.

It is found in the plastid. The protein resides in the chloroplast. One of the primary rRNA binding proteins, it binds specifically to the 5'-end of 16S ribosomal RNA. This chain is Small ribosomal subunit protein uS17c (rps17), found in Emiliania huxleyi (Coccolithophore).